The following is a 240-amino-acid chain: UDP-2,3-diacylglucosamine hydrolase (240 aa).

The Mn(2+) site is built by aspartate 9, histidine 11, aspartate 43, asparagine 81, and histidine 116. Residue 81-82 (NR) coordinates substrate. Residues aspartate 124, serine 162, lysine 166, lysine 169, and histidine 197 each contribute to the substrate site. Histidine 197 and histidine 199 together coordinate Mn(2+).

It belongs to the LpxH family. Mn(2+) is required as a cofactor.

It localises to the cell inner membrane. It catalyses the reaction UDP-2-N,3-O-bis[(3R)-3-hydroxytetradecanoyl]-alpha-D-glucosamine + H2O = 2-N,3-O-bis[(3R)-3-hydroxytetradecanoyl]-alpha-D-glucosaminyl 1-phosphate + UMP + 2 H(+). It functions in the pathway glycolipid biosynthesis; lipid IV(A) biosynthesis; lipid IV(A) from (3R)-3-hydroxytetradecanoyl-[acyl-carrier-protein] and UDP-N-acetyl-alpha-D-glucosamine: step 4/6. Hydrolyzes the pyrophosphate bond of UDP-2,3-diacylglucosamine to yield 2,3-diacylglucosamine 1-phosphate (lipid X) and UMP by catalyzing the attack of water at the alpha-P atom. Involved in the biosynthesis of lipid A, a phosphorylated glycolipid that anchors the lipopolysaccharide to the outer membrane of the cell. The protein is UDP-2,3-diacylglucosamine hydrolase of Neisseria meningitidis serogroup C (strain 053442).